The primary structure comprises 201 residues: UPF0301 protein RHE_CH00966 (201 aa).

It belongs to the UPF0301 (AlgH) family.

This is UPF0301 protein RHE_CH00966 from Rhizobium etli (strain ATCC 51251 / DSM 11541 / JCM 21823 / NBRC 15573 / CFN 42).